A 240-amino-acid chain; its full sequence is Large ribosomal subunit protein uL1 (240 aa).

Belongs to the universal ribosomal protein uL1 family. As to quaternary structure, part of the 50S ribosomal subunit.

Functionally, binds directly to 23S rRNA. The L1 stalk is quite mobile in the ribosome, and is involved in E site tRNA release. Its function is as follows. Protein L1 is also a translational repressor protein, it controls the translation of the L11 operon by binding to its mRNA. This is Large ribosomal subunit protein uL1 from Streptomyces griseus subsp. griseus (strain JCM 4626 / CBS 651.72 / NBRC 13350 / KCC S-0626 / ISP 5235).